A 393-amino-acid polypeptide reads, in one-letter code: Sedoheptulose-1,7-bisphosphatase, chloroplastic (393 aa).

Cysteines 115 and 120 form a disulfide. Positions 126, 155, 176, 178, and 179 each coordinate Mg(2+). Substrate-binding positions include 179 to 182 (DGSS), Y290, and K320. Residue E326 coordinates Mg(2+).

This sequence belongs to the FBPase class 1 family. As to quaternary structure, homodimer. It depends on Mg(2+) as a cofactor.

The protein resides in the plastid. The protein localises to the chloroplast. The catalysed reaction is D-sedoheptulose 1,7-bisphosphate + H2O = D-sedoheptulose 7-phosphate + phosphate. The protein operates within carbohydrate biosynthesis; Calvin cycle. This is Sedoheptulose-1,7-bisphosphatase, chloroplastic from Triticum aestivum (Wheat).